A 129-amino-acid polypeptide reads, in one-letter code: Small ribosomal subunit protein uS11 (129 aa).

Belongs to the universal ribosomal protein uS11 family. In terms of assembly, part of the 30S ribosomal subunit. Interacts with proteins S7 and S18. Binds to IF-3.

Its function is as follows. Located on the platform of the 30S subunit, it bridges several disparate RNA helices of the 16S rRNA. Forms part of the Shine-Dalgarno cleft in the 70S ribosome. The chain is Small ribosomal subunit protein uS11 from Synechococcus sp. (strain RCC307).